We begin with the raw amino-acid sequence, 266 residues long: Expansin-A13 (266 aa).

The first 19 residues, 1–19, serve as a signal peptide directing secretion; the sequence is MQRFLLPLLFLALSPPAIC. In terms of domain architecture, Expansin-like EG45 spans 58 to 171; sequence GGACGYGDLV…RRINCRKEGS (114 aa). The Expansin-like CBD domain maps to 181–260; sequence IFISVLITNV…NWNYGQTFEG (80 aa).

This sequence belongs to the expansin family. Expansin A subfamily.

The protein resides in the secreted. The protein localises to the cell wall. Its subcellular location is the membrane. Its function is as follows. Causes loosening and extension of plant cell walls by disrupting non-covalent bonding between cellulose microfibrils and matrix glucans. No enzymatic activity has been found. This chain is Expansin-A13 (EXPA13), found in Arabidopsis thaliana (Mouse-ear cress).